The sequence spans 532 residues: Phosphoenolpyruvate carboxykinase (ATP) (532 aa).

Substrate contacts are provided by R60, Y200, and K206. ATP is bound by residues K206, H225, and 242–250; that span reads GLSGTGKTT. The Mn(2+) site is built by K206 and H225. S244 serves as a coordination point for substrate. Residue D263 participates in Mn(2+) binding. Residues E291, R327, 443-444, and T449 each bind ATP; that span reads RI. Residue R327 coordinates substrate.

The protein belongs to the phosphoenolpyruvate carboxykinase (ATP) family. Monomer. It depends on Mn(2+) as a cofactor.

The protein resides in the cytoplasm. It catalyses the reaction oxaloacetate + ATP = phosphoenolpyruvate + ADP + CO2. It participates in carbohydrate biosynthesis; gluconeogenesis. Its activity is regulated as follows. Inhibited by p-chloromercuribenzoate. In terms of biological role, involved in gluconeogenesis. Catalyzes the conversion of oxaloacetate (OAA) to phosphoenolpyruvate (PEP) through direct phosphoryl transfer between the nucleoside triphosphate and OAA. The sequence is that of Phosphoenolpyruvate carboxykinase (ATP) from Anaerobiospirillum succiniciproducens.